Reading from the N-terminus, the 111-residue chain is Aspartate 1-decarboxylase (111 aa).

Ser-25 acts as the Schiff-base intermediate with substrate; via pyruvic acid in catalysis. A Pyruvic acid (Ser) modification is found at Ser-25. Thr-57 is a binding site for substrate. Catalysis depends on Tyr-58, which acts as the Proton donor. 73 to 75 (GPA) provides a ligand contact to substrate.

This sequence belongs to the PanD family. Heterooctamer of four alpha and four beta subunits. It depends on pyruvate as a cofactor. Post-translationally, is synthesized initially as an inactive proenzyme, which is activated by self-cleavage at a specific serine bond to produce a beta-subunit with a hydroxyl group at its C-terminus and an alpha-subunit with a pyruvoyl group at its N-terminus.

The protein resides in the cytoplasm. The catalysed reaction is L-aspartate + H(+) = beta-alanine + CO2. It functions in the pathway cofactor biosynthesis; (R)-pantothenate biosynthesis; beta-alanine from L-aspartate: step 1/1. In terms of biological role, catalyzes the pyruvoyl-dependent decarboxylation of aspartate to produce beta-alanine. The protein is Aspartate 1-decarboxylase of Francisella tularensis subsp. holarctica (strain LVS).